Here is a 240-residue protein sequence, read N- to C-terminus: Protein RoBo-1 (240 aa).

Positions 1-26 are cleaved as a signal peptide; it reads MSWFLVLKCLLTVCIISHLSVSSTES. The N-linked (GlcNAc...) asparagine glycan is linked to Asn42. 5 disulfides stabilise this stretch: Cys47–Cys76, Cys81–Cys102, Cys103–Cys108, Cys127–Cys151, and Cys144–Cys171. A glycan (N-linked (GlcNAc...) asparagine) is linked at Asn153.

This sequence belongs to the CNF-like-inhibitor family. Post-translationally, N-glycosylated. Expressed abundantly in bone, including the lengthening growth plate where cartilage is remodeled into bone.

The protein localises to the secreted. Its function is as follows. May play a novel role in the growth or remodeling of bone. The protein is Protein RoBo-1 of Rattus norvegicus (Rat).